Consider the following 819-residue polypeptide: ATP-dependent DNA helicase PIF4 (819 aa).

A mitochondrion-targeting transit peptide spans 1-84 (MLLNSTRTLL…RQASSAGHND (84 aa)). A disordered region spans residues 76-101 (QASSAGHNDLGLQEKEKSSGDESAFS). An ATP-binding site is contributed by 126 to 133 (GGAGVGKS). The DNA-binding element occupies 734 to 754 (HIIYVAASRVKKFSQLRMINV).

It belongs to the helicase family. PIF1 subfamily. In terms of assembly, monomer. Requires Mg(2+) as cofactor.

The protein localises to the mitochondrion matrix. Its subcellular location is the kinetoplast. The enzyme catalyses Couples ATP hydrolysis with the unwinding of duplex DNA at the replication fork by translocating in the 5'-3' direction. This creates two antiparallel DNA single strands (ssDNA). The leading ssDNA polymer is the template for DNA polymerase III holoenzyme which synthesizes a continuous strand.. It carries out the reaction ATP + H2O = ADP + phosphate + H(+). Functionally, DNA-dependent ATPase and 5'-3' DNA helicase required for the maintenance of mitochondrial (kinetoplast) genome stability. The sequence is that of ATP-dependent DNA helicase PIF4 from Trypanosoma brucei brucei (strain 927/4 GUTat10.1).